A 119-amino-acid polypeptide reads, in one-letter code: Large ribosomal subunit protein bL20 (119 aa).

It belongs to the bacterial ribosomal protein bL20 family.

In terms of biological role, binds directly to 23S ribosomal RNA and is necessary for the in vitro assembly process of the 50S ribosomal subunit. It is not involved in the protein synthesizing functions of that subunit. The sequence is that of Large ribosomal subunit protein bL20 from Azoarcus sp. (strain BH72).